The chain runs to 391 residues: Succinyl-diaminopimelate desuccinylase (391 aa).

Residue His78 coordinates Zn(2+). Asp80 is a catalytic residue. Asp111 provides a ligand contact to Zn(2+). Catalysis depends on Glu145, which acts as the Proton acceptor. Positions 146, 174, and 360 each coordinate Zn(2+).

Belongs to the peptidase M20A family. DapE subfamily. Homodimer. The cofactor is Zn(2+). Requires Co(2+) as cofactor.

The enzyme catalyses N-succinyl-(2S,6S)-2,6-diaminopimelate + H2O = (2S,6S)-2,6-diaminopimelate + succinate. Its pathway is amino-acid biosynthesis; L-lysine biosynthesis via DAP pathway; LL-2,6-diaminopimelate from (S)-tetrahydrodipicolinate (succinylase route): step 3/3. Catalyzes the hydrolysis of N-succinyl-L,L-diaminopimelic acid (SDAP), forming succinate and LL-2,6-diaminopimelate (DAP), an intermediate involved in the bacterial biosynthesis of lysine and meso-diaminopimelic acid, an essential component of bacterial cell walls. In Acidovorax ebreus (strain TPSY) (Diaphorobacter sp. (strain TPSY)), this protein is Succinyl-diaminopimelate desuccinylase.